Here is a 314-residue protein sequence, read N- to C-terminus: Ribosomal RNA small subunit methyltransferase H (314 aa).

Residues 34 to 36, D53, F82, D103, and Q110 contribute to the S-adenosyl-L-methionine site; that span reads GGH.

Belongs to the methyltransferase superfamily. RsmH family.

The protein resides in the cytoplasm. The enzyme catalyses cytidine(1402) in 16S rRNA + S-adenosyl-L-methionine = N(4)-methylcytidine(1402) in 16S rRNA + S-adenosyl-L-homocysteine + H(+). Functionally, specifically methylates the N4 position of cytidine in position 1402 (C1402) of 16S rRNA. In Limosilactobacillus fermentum (strain NBRC 3956 / LMG 18251) (Lactobacillus fermentum), this protein is Ribosomal RNA small subunit methyltransferase H.